A 330-amino-acid chain; its full sequence is Transcriptional regulatory protein PHO23 (330 aa).

The interval 139–272 (EKIESKSNSK…NSNNSRISRP (134 aa)) is disordered. Residues 231 to 254 (TAVSPSTISTATAVNNGRIGTSTA) are compositionally biased toward polar residues. Positions 255–269 (SRGVSSVGNSNNSRI) are enriched in low complexity. The segment at 280 to 329 (PLYCYCNQVAYGEMVGCDGADCELEWFHLPCIGLETLPKGKWYCDDCKKK) adopts a PHD-type zinc-finger fold. Zn(2+) is bound by residues cysteine 283, cysteine 285, cysteine 296, cysteine 301, histidine 307, cysteine 310, cysteine 323, and cysteine 326.

The protein belongs to the ING family. Interacts with H3K4me3 and to a lesser extent with H3K4me2. Component of the RPD3C(L) complex composed of at least ASH1, CTI6, DEP1, PHO23, RPD3, RXT2, RXT3, SAP30, SDS3, SIN3, UME1 and UME6.

The protein localises to the nucleus. Component of the RPD3C(L) histone deacetylase complex (HDAC) responsible for the deacetylation of lysine residues on the N-terminal part of the core histones (H2A, H2B, H3 and H4). Histone deacetylation gives a tag for epigenetic repression and plays an important role in transcriptional regulation, cell cycle progression and developmental events. The protein is Transcriptional regulatory protein PHO23 (PHO23) of Saccharomyces cerevisiae (strain ATCC 204508 / S288c) (Baker's yeast).